Reading from the N-terminus, the 438-residue chain is Chromosomal replication initiator protein DnaA (438 aa).

The interval 1-71 is domain I, interacts with DnaA modulators; sequence MTELDSLWEA…VEIVYQRTGQ (71 aa). Residues 71–101 form a domain II region; sequence QEIRPDYVLATDPTPLAQTPPRPQSTFKEET. Residues 81-100 form a disordered region; the sequence is TDPTPLAQTPPRPQSTFKEE. The interval 102-318 is domain III, AAA+ region; sequence PLNPEYTFQT…GALMRIRVFS (217 aa). The ATP site is built by Gly146, Gly148, Lys149, and Thr150. The tract at residues 319 to 438 is domain IV, binds dsDNA; sequence ELHQQPITLK…LVKLKNDLQA (120 aa).

It belongs to the DnaA family. As to quaternary structure, oligomerizes as a right-handed, spiral filament on DNA at oriC.

The protein localises to the cytoplasm. Plays an essential role in the initiation and regulation of chromosomal replication. ATP-DnaA binds to the origin of replication (oriC) to initiate formation of the DNA replication initiation complex once per cell cycle. Binds the DnaA box (a 9 base pair repeat at the origin) and separates the double-stranded (ds)DNA. Forms a right-handed helical filament on oriC DNA; dsDNA binds to the exterior of the filament while single-stranded (ss)DNA is stabiized in the filament's interior. The ATP-DnaA-oriC complex binds and stabilizes one strand of the AT-rich DNA unwinding element (DUE), permitting loading of DNA polymerase. After initiation quickly degrades to an ADP-DnaA complex that is not apt for DNA replication. Binds acidic phospholipids. The protein is Chromosomal replication initiator protein DnaA of Limosilactobacillus fermentum (strain NBRC 3956 / LMG 18251) (Lactobacillus fermentum).